Here is a 499-residue protein sequence, read N- to C-terminus: Protein adenylyltransferase Fic (499 aa).

A helical membrane pass occupies residues 38–58 (FHYFVIFASGSLFSGLMFGLL). TPR repeat units follow at residues 126 to 159 (ALSSLKVAIEMKTMGKDDKAARLFQHALALSPKH) and 160 to 194 (PEILTKYGEFLEHNQQDVVRADHYYYQALTVNPSH). The Inhibitory (S/T)XXXE(G/N) motif signature appears at 251 to 256 (SVGIEG). ATP is bound by residues Glu255 and 337-340 (VGGH). Residues 306 to 441 (ITLKDILEIH…IRPFVRFIAD (136 aa)) form the Fido domain. His384 is a catalytic residue. ATP is bound by residues 388–395 (DGNGRTSR), 420–421 (YY), and Asn428.

This sequence belongs to the fic family. Homodimer.

It is found in the membrane. The catalysed reaction is L-tyrosyl-[protein] + ATP = O-(5'-adenylyl)-L-tyrosyl-[protein] + diphosphate. It catalyses the reaction L-threonyl-[protein] + ATP = 3-O-(5'-adenylyl)-L-threonyl-[protein] + diphosphate. The enzyme catalyses 3-O-(5'-adenylyl)-L-threonyl-[protein] + H2O = L-threonyl-[protein] + AMP + H(+). Its activity is regulated as follows. The side chain of Glu-255 determines which of the two opposing activities (AMPylase or de-AMPylase) will take place. In response to endoplasmic reticulum stress, mediates de-AMPylase activity. Adenylyltransferase activity is inhibited by the inhibitory helix present at the N-terminus: Glu-255 binds ATP and competes with ATP-binding at Arg-395, thereby preventing adenylyltransferase activity. In unstressed cells, disengagement of Glu-255 promotes adenylyltransferase activity. Activation dissociates ATP-binding from Glu-255, allowing ordered binding of the entire ATP moiety with the alpha-phosphate in an orientation that is productive for accepting an incoming target hydroxyl side chain. Functionally, protein that can both mediate the addition of adenosine 5'-monophosphate (AMP) to specific residues of target proteins (AMPylation), and the removal of the same modification from target proteins (de-AMPylation), depending on the context. The side chain of Glu-255 determines which of the two opposing activities (AMPylase or de-AMPylase) will take place. Acts as a key regulator of the unfolded protein response (UPR) by mediating AMPylation or de-AMPylation of Hsc70-3/BiP. In unstressed cells, acts as an adenylyltransferase by mediating AMPylation of Hsc70-3/BiP at 'Thr-518', thereby inactivating it. In response to endoplasmic reticulum stress, acts as a phosphodiesterase by mediating removal of ATP (de-AMPylation) from Hsc70-3/BiP at 'Thr-518', leading to restore HSPA5/BiP activity. The chain is Protein adenylyltransferase Fic from Aedes aegypti (Yellowfever mosquito).